Reading from the N-terminus, the 202-residue chain is Glycerol-3-phosphate acyltransferase (202 aa).

The next 5 membrane-spanning stretches (helical) occupy residues 3–23 (ILLA…VVVS), 51–71 (KAAI…VWLV), 74–94 (FGIG…LGHL), 116–136 (AVHP…AFFF), and 140–160 (SLAA…LFGT).

Belongs to the PlsY family. Probably interacts with PlsX.

Its subcellular location is the cell inner membrane. It catalyses the reaction an acyl phosphate + sn-glycerol 3-phosphate = a 1-acyl-sn-glycero-3-phosphate + phosphate. The protein operates within lipid metabolism; phospholipid metabolism. Functionally, catalyzes the transfer of an acyl group from acyl-phosphate (acyl-PO(4)) to glycerol-3-phosphate (G3P) to form lysophosphatidic acid (LPA). This enzyme utilizes acyl-phosphate as fatty acyl donor, but not acyl-CoA or acyl-ACP. The chain is Glycerol-3-phosphate acyltransferase from Burkholderia thailandensis (strain ATCC 700388 / DSM 13276 / CCUG 48851 / CIP 106301 / E264).